A 382-amino-acid polypeptide reads, in one-letter code: Chorismate synthase (382 aa).

R39 and R45 together coordinate NADP(+). FMN-binding positions include 127–129, 245–246, G290, 305–309, and R331; these read RAS, QA, and KPIPT.

Belongs to the chorismate synthase family. As to quaternary structure, homotetramer. FMNH2 serves as cofactor.

It catalyses the reaction 5-O-(1-carboxyvinyl)-3-phosphoshikimate = chorismate + phosphate. It participates in metabolic intermediate biosynthesis; chorismate biosynthesis; chorismate from D-erythrose 4-phosphate and phosphoenolpyruvate: step 7/7. Its function is as follows. Catalyzes the anti-1,4-elimination of the C-3 phosphate and the C-6 proR hydrogen from 5-enolpyruvylshikimate-3-phosphate (EPSP) to yield chorismate, which is the branch point compound that serves as the starting substrate for the three terminal pathways of aromatic amino acid biosynthesis. This reaction introduces a second double bond into the aromatic ring system. The polypeptide is Chorismate synthase (Desulfitobacterium hafniense (strain DSM 10664 / DCB-2)).